Reading from the N-terminus, the 333-residue chain is Ketol-acid reductoisomerase (NADP(+)) (333 aa).

In terms of domain architecture, KARI N-terminal Rossmann spans Met-1–Thr-179. NADP(+) contacts are provided by residues Tyr-22–Gln-25, Lys-45, Ser-48, Ser-50, and Asp-80–Gln-83. Residue His-105 is part of the active site. Gly-131 is a binding site for NADP(+). In terms of domain architecture, KARI C-terminal knotted spans Thr-180–Val-325. The Mg(2+) site is built by Asp-188, Glu-192, Glu-224, and Glu-228. Ser-249 lines the substrate pocket.

This sequence belongs to the ketol-acid reductoisomerase family. It depends on Mg(2+) as a cofactor.

It catalyses the reaction (2R)-2,3-dihydroxy-3-methylbutanoate + NADP(+) = (2S)-2-acetolactate + NADPH + H(+). The catalysed reaction is (2R,3R)-2,3-dihydroxy-3-methylpentanoate + NADP(+) = (S)-2-ethyl-2-hydroxy-3-oxobutanoate + NADPH + H(+). The protein operates within amino-acid biosynthesis; L-isoleucine biosynthesis; L-isoleucine from 2-oxobutanoate: step 2/4. It participates in amino-acid biosynthesis; L-valine biosynthesis; L-valine from pyruvate: step 2/4. Functionally, involved in the biosynthesis of branched-chain amino acids (BCAA). Catalyzes an alkyl-migration followed by a ketol-acid reduction of (S)-2-acetolactate (S2AL) to yield (R)-2,3-dihydroxy-isovalerate. In the isomerase reaction, S2AL is rearranged via a Mg-dependent methyl migration to produce 3-hydroxy-3-methyl-2-ketobutyrate (HMKB). In the reductase reaction, this 2-ketoacid undergoes a metal-dependent reduction by NADPH to yield (R)-2,3-dihydroxy-isovalerate. In Mycobacterium bovis (strain ATCC BAA-935 / AF2122/97), this protein is Ketol-acid reductoisomerase (NADP(+)).